Consider the following 81-residue polypeptide: Photosystem I iron-sulfur center (81 aa).

2 4Fe-4S ferredoxin-type domains span residues 2–31 (SHAV…MVPW) and 39–68 (IASA…VRVY). [4Fe-4S] cluster-binding residues include C11, C14, C17, C21, C48, C51, C54, and C58.

As to quaternary structure, the eukaryotic PSI reaction center is composed of at least 11 subunits. Requires [4Fe-4S] cluster as cofactor.

Its subcellular location is the plastid. The protein localises to the chloroplast thylakoid membrane. The enzyme catalyses reduced [plastocyanin] + hnu + oxidized [2Fe-2S]-[ferredoxin] = oxidized [plastocyanin] + reduced [2Fe-2S]-[ferredoxin]. Its function is as follows. Apoprotein for the two 4Fe-4S centers FA and FB of photosystem I (PSI); essential for photochemical activity. FB is the terminal electron acceptor of PSI, donating electrons to ferredoxin. The C-terminus interacts with PsaA/B/D and helps assemble the protein into the PSI complex. Required for binding of PsaD and PsaE to PSI. PSI is a plastocyanin/cytochrome c6-ferredoxin oxidoreductase, converting photonic excitation into a charge separation, which transfers an electron from the donor P700 chlorophyll pair to the spectroscopically characterized acceptors A0, A1, FX, FA and FB in turn. In Ostreococcus tauri, this protein is Photosystem I iron-sulfur center.